The chain runs to 312 residues: Nucleosome assembly protein 1-like 4 (312 aa).

Residues Val-24–Glu-78 are a coiled coil. Positions Leu-45–Gln-60 match the Nuclear export signal motif. Positions Glu-288–Ala-312 are disordered.

The protein belongs to the nucleosome assembly protein (NAP) family.

Its subcellular location is the nucleus. It localises to the cytoplasm. May modulate chromatin structure by regulation of nucleosome assembly/disassembly. The chain is Nucleosome assembly protein 1-like 4 from Oryza sativa subsp. indica (Rice).